Consider the following 848-residue polypeptide: Alanine--tRNA ligase (848 aa).

Residues His553, His557, Cys654, and His658 each contribute to the Zn(2+) site.

This sequence belongs to the class-II aminoacyl-tRNA synthetase family. Requires Zn(2+) as cofactor.

It localises to the cytoplasm. It carries out the reaction tRNA(Ala) + L-alanine + ATP = L-alanyl-tRNA(Ala) + AMP + diphosphate. Catalyzes the attachment of alanine to tRNA(Ala) in a two-step reaction: alanine is first activated by ATP to form Ala-AMP and then transferred to the acceptor end of tRNA(Ala). Also edits incorrectly charged Ser-tRNA(Ala) and Gly-tRNA(Ala) via its editing domain. The polypeptide is Alanine--tRNA ligase (Neorickettsia sennetsu (strain ATCC VR-367 / Miyayama) (Ehrlichia sennetsu)).